A 661-amino-acid polypeptide reads, in one-letter code: Phospholipid:diacylglycerol acyltransferase (661 aa).

The interval 1–71 (MGTLFRRNVQ…FDRKRDGNGR (71 aa)) is disordered. Topologically, residues 1–80 (MGTLFRRNVQ…RKRWRDSRRL (80 aa)) are cytoplasmic. The segment covering 34–48 (HIHHQQGLGHKRRRG) has biased composition (basic residues). Short sequence motifs (bipartite nuclear localization signal) lie at residues 43 to 50 (HKRRRGIS) and 64 to 71 (RKRDGNGR). Residues 54-70 (KRNERGKDFDRKRDGNG) show a composition bias toward basic and acidic residues. Residues 81–101 (IFILGAFLGVLLPFSFGAYHV) form a helical membrane-spanning segment. Residues 102–661 (HNSDSDLFDN…QWVSQMPFPM (560 aa)) are Lumenal-facing. Gln-162 is a substrate binding site. The short motif at 322–326 (GHSMG) is the GHSXG lipase motif element. The Acyl-ester intermediate role is filled by Ser-324. Residue Met-325 participates in substrate binding. Asn-453, Asn-461, and Asn-469 each carry an N-linked (GlcNAc...) asparagine glycan. Asp-567 (charge relay system) is an active-site residue. Asn-594 is a glycosylation site (N-linked (GlcNAc...) asparagine). Residue His-618 is the Charge relay system of the active site.

The protein belongs to the AB hydrolase superfamily. Lipase family.

It is found in the endoplasmic reticulum membrane. Its subcellular location is the nucleus inner membrane. It catalyses the reaction a glycerophospholipid + a 1,2-diacyl-sn-glycerol = a monoacylglycerophospholipid + a triacyl-sn-glycerol. The catalysed reaction is a 1-acyl-sn-glycerol + a 1,2-diacyl-sn-glycero-3-phosphocholine = a 1-acyl-sn-glycero-3-phosphocholine + a 1,2-diacyl-sn-glycerol. It carries out the reaction 1,2-di-(9Z-octadecenoyl)-sn-glycero-3-phosphoethanolamine + 1,2-di-(9Z-octadecenoyl)-sn-glycerol = 1-(9Z-octadecenoyl)-sn-glycero-3-phosphoethanolamine + 1,2,3-tri-(9Z-octadecenoyl)-glycerol. The enzyme catalyses 1,2-di-(9Z-octadecenoyl)-sn-glycerol + 1,2-di-(9Z-octadecenoyl)-sn-glycero-3-phosphocholine = 1,2,3-tri-(9Z-octadecenoyl)-glycerol + 1-(9Z-octadecenoyl)-sn-glycero-3-phosphocholine. It catalyses the reaction 1-(9Z-octadecenoyl)-sn-glycerol + 1,2-di-(9Z-octadecenoyl)-sn-glycero-3-phosphocholine = di-(9Z)-octadecenoylglycerol + 1-(9Z-octadecenoyl)-sn-glycero-3-phosphocholine. The catalysed reaction is 2-(9Z-octadecenoyl)-glycerol + 1,2-di-(9Z-octadecenoyl)-sn-glycero-3-phosphocholine = 1,2-di-(9Z-octadecenoyl)-glycerol + 1-(9Z-octadecenoyl)-sn-glycero-3-phosphocholine. It carries out the reaction 1-(9Z-octadecenoyl)-2-hexadecanoyl-sn-glycero-3-phosphoethanolamine + 1,2-di-(9Z-octadecenoyl)-sn-glycerol = 1,2-di-(9Z)-octadecenoyl-3-hexadecanoyl-sn-glycerol + 1-(9Z-octadecenoyl)-sn-glycero-3-phosphoethanolamine. The enzyme catalyses 1-(9Z-octadecenoyl)-2-octadecanoyl-sn-glycero-3-phosphoethanolamine + 1,2-di-(9Z-octadecenoyl)-sn-glycerol = 1,2-di-(9Z)-octadecenoyl-3-octadecanoyl-sn-glycerol + 1-(9Z-octadecenoyl)-sn-glycero-3-phosphoethanolamine. It catalyses the reaction 1-(9Z)-octadecenoyl-2-(9Z,12Z)-octadecadienoyl-sn-glycero-3-phosphoethanolamine + 1,2-di-(9Z-octadecenoyl)-sn-glycerol = 1,2-di-(9Z)-octadecenoyl-3-(9Z,12Z)-octadecadienoyl-sn-glycerol + 1-(9Z-octadecenoyl)-sn-glycero-3-phosphoethanolamine. Functionally, catalyzes triacylglycerol (TAG) formation by an acyl-CoA independent pathway. The enzyme specifically transfers acyl groups from the sn-2 position of a phospholipid to diacylglycerol (DAG), thus forming an sn-1-lysophospholipid. The preferred acyl donors are phosphatidylethanolamine (PE) and phosphatidylcholine (PC). Also capable of using broad acyl donors such as phosphatidic acid (PA), phosphatidylserine (PS), phosphatidylglycerol (PG) and phosphatidylinositol (PI), as well as monogalactosyldiacylglycerol (MGDG), digalactosyldiacylglycerol (DGDG), and acyl-CoA, and it is more likely to use unsaturated acyl donors. As acyl acceptors, it prefers 1,2- over 1,3-diacylglycerol (DAG). Additionally, has esterification activity that can utilize methanol as acyl acceptor to generate fatty acid methyl esters (FAME). Can also utilize ceramide instead of DAG, acylating the ceramides by attaching a fatty acid to the hydroxy group on the first carbon atom of the long-chain base to produce 1-O-acylceramides. Involved in lipid particle synthesis from the endoplasmic reticulum, promoting localized TAG production at discrete ER subdomains. Relocates from the endoplasmic reticulum to a subdomain of the inner nuclear membrane upon nutrient starvation, where it provides a site of TAG synthesis, which is coupled with nuclear membrane remodeling. The chain is Phospholipid:diacylglycerol acyltransferase from Saccharomyces cerevisiae (strain ATCC 204508 / S288c) (Baker's yeast).